Consider the following 207-residue polypeptide: Small ribosomal subunit protein uS2 (207 aa).

Belongs to the universal ribosomal protein uS2 family.

The chain is Small ribosomal subunit protein uS2 from Methanocella arvoryzae (strain DSM 22066 / NBRC 105507 / MRE50).